A 255-amino-acid chain; its full sequence is Glycerol-3-phosphate regulon repressor (255 aa).

One can recognise an HTH deoR-type domain in the interval 3-58 (QSLRHQKIIKLVEQSGYLSTEELVAALDVSPQTIRRDLNILAELDLIRRHHGGAAS). The segment at residues 20–39 (LSTEELVAALDVSPQTIRRD) is a DNA-binding region (H-T-H motif).

In terms of biological role, repressor of the glycerol-3-phosphate regulon. This Haemophilus influenzae (strain ATCC 51907 / DSM 11121 / KW20 / Rd) protein is Glycerol-3-phosphate regulon repressor (glpR).